The primary structure comprises 387 residues: Putative protein FAM157C (387 aa).

Disordered regions lie at residues 1–21 (MGPL…PLPK), 182–226 (TARP…GAEP), and 329–353 (RARD…TSSG).

It belongs to the FAM157 family.

The polypeptide is Putative protein FAM157C (FAM157C) (Homo sapiens (Human)).